Consider the following 789-residue polypeptide: Trans-4-hydroxy-L-proline dehydratase (789 aa).

A PFL domain is found at 7-663; that stretch reads ERTKKLREES…IMGASPNGRL (657 aa). Catalysis depends on Cys-434, which acts as the Cysteine radical intermediate. Residue Glu-436 is the Proton acceptor of the active site. In terms of domain architecture, Glycine radical spans 670–789; the sequence is EGISPEKGGD…EIIGRTEQTF (120 aa). A Glycine radical modification is found at Gly-765.

The protein belongs to the glycyl radical enzyme (GRE) family. HYPD subfamily. Requires the activating protein PflE to generate the key active site glycyl radical on Gly-765 that is involved in catalysis.

It carries out the reaction trans-4-hydroxy-L-proline = (S)-1-pyrroline-5-carboxylate + H2O + H(+). In terms of biological role, glycine radical enzyme that catalyzes the dehydration of the non-proteinogenic amino acid trans-4-hydroxy-L-proline (Hyp) to produce delta(1)-pyrroline-5-carboxylate (P5C). Is involved in the anaerobic degradation of 4-hydroxyproline. The chain is Trans-4-hydroxy-L-proline dehydratase from Clostridioides difficile (Peptoclostridium difficile).